We begin with the raw amino-acid sequence, 234 residues long: Large ribosomal subunit protein uL1 (234 aa).

This sequence belongs to the universal ribosomal protein uL1 family. Part of the 50S ribosomal subunit.

Its function is as follows. Binds directly to 23S rRNA. The L1 stalk is quite mobile in the ribosome, and is involved in E site tRNA release. Protein L1 is also a translational repressor protein, it controls the translation of the L11 operon by binding to its mRNA. This is Large ribosomal subunit protein uL1 from Pectobacterium carotovorum subsp. carotovorum (strain PC1).